Reading from the N-terminus, the 418-residue chain is Trimethyllysine dioxygenase, mitochondrial (418 aa).

The Fe cation site is built by histidine 239, aspartate 241, and histidine 386.

This sequence belongs to the gamma-BBH/TMLD family. As to quaternary structure, homodimer. Requires Fe(2+) as cofactor. L-ascorbate serves as cofactor.

It is found in the mitochondrion matrix. The enzyme catalyses N(6),N(6),N(6)-trimethyl-L-lysine + 2-oxoglutarate + O2 = (3S)-3-hydroxy-N(6),N(6),N(6)-trimethyl-L-lysine + succinate + CO2. It participates in amine and polyamine biosynthesis; carnitine biosynthesis. In terms of biological role, converts trimethyllysine (TML) into hydroxytrimethyllysine (HTML). The sequence is that of Trimethyllysine dioxygenase, mitochondrial (TMLHE) from Gallus gallus (Chicken).